Reading from the N-terminus, the 104-residue chain is Large ribosomal subunit protein bL21 (104 aa).

Belongs to the bacterial ribosomal protein bL21 family. In terms of assembly, part of the 50S ribosomal subunit. Contacts protein L20.

In terms of biological role, this protein binds to 23S rRNA in the presence of protein L20. The polypeptide is Large ribosomal subunit protein bL21 (Thermodesulfovibrio yellowstonii (strain ATCC 51303 / DSM 11347 / YP87)).